Here is a 238-residue protein sequence, read N- to C-terminus: Green fluorescent protein (238 aa).

The 5-imidazolinone (Ser-Gly) cross-link spans 65–67; that stretch reads SYG. The residue at position 66 (Y66) is a (Z)-2,3-didehydrotyrosine.

Belongs to the GFP family. Monomer. Contains a chromophore consisting of modified amino acid residues. The chromophore is formed by autocatalytic backbone condensation between Ser-65 and Gly-67, and oxidation of Tyr-66 to didehydrotyrosine. Maturation of the chromophore requires nothing other than molecular oxygen. Photocytes.

Energy-transfer acceptor. Its role is to transduce the blue chemiluminescence of the protein aequorin into green fluorescent light by energy transfer. Fluoresces in vivo upon receiving energy from the Ca(2+)-activated photoprotein aequorin. This is Green fluorescent protein (GFP) from Aequorea victoria (Water jellyfish).